The chain runs to 427 residues: 3-isopropylmalate dehydratase large subunit (427 aa).

Positions 308, 368, and 371 each coordinate [4Fe-4S] cluster.

This sequence belongs to the aconitase/IPM isomerase family. LeuC type 2 subfamily. In terms of assembly, heterodimer of LeuC and LeuD. Requires [4Fe-4S] cluster as cofactor.

It carries out the reaction (2R,3S)-3-isopropylmalate = (2S)-2-isopropylmalate. The protein operates within amino-acid biosynthesis; L-leucine biosynthesis; L-leucine from 3-methyl-2-oxobutanoate: step 2/4. In terms of biological role, catalyzes the isomerization between 2-isopropylmalate and 3-isopropylmalate, via the formation of 2-isopropylmaleate. This Geotalea uraniireducens (strain Rf4) (Geobacter uraniireducens) protein is 3-isopropylmalate dehydratase large subunit.